Consider the following 66-residue polypeptide: Conotoxin Cal6.38 (66 aa).

The first 22 residues, 1-22, serve as a signal peptide directing secretion; the sequence is MKLTFVLIVAVLVLAVCNFTVA. Disulfide bonds link C38/C55, C45/C59, and C54/C64.

This sequence belongs to the conotoxin O1 superfamily. As to expression, expressed by the venom duct.

It is found in the secreted. In terms of biological role, probable neurotoxin. The chain is Conotoxin Cal6.38 from Californiconus californicus (California cone).